Here is a 350-residue protein sequence, read N- to C-terminus: MDINLFDFHLPEELIAQTPLEKRETSRLMVLDRETGDIEHKHFSDILAYLHEGDCLVLNETKVMPARLHGVKEDTGAHIEVLLLKQEEGDTWETLVKPAKRVKEGTVISFGEGKLKATCVGTADQGGRQLEFSYDGIFYEILDELGEMPLPPYIKETLEDRDRYQTVYAKEIGSAAAPTAGLHFTEELLEKLQQKGVKLAFITLHVGLGTFRPVSTDKIEDHHMHAEYYHMSQETADLLNDVKVNGGRIITVGTTSTRTLETIATEHDGKLCGASGWTDIFMYPGYEFKAIDGLITNFHLPKSTLIMLVSAFAGRENVLHAYNEAVKEKYRFFSFGDAMFLASHAKERMK.

It belongs to the QueA family. In terms of assembly, monomer.

It is found in the cytoplasm. It catalyses the reaction 7-aminomethyl-7-carbaguanosine(34) in tRNA + S-adenosyl-L-methionine = epoxyqueuosine(34) in tRNA + adenine + L-methionine + 2 H(+). It participates in tRNA modification; tRNA-queuosine biosynthesis. Its function is as follows. Transfers and isomerizes the ribose moiety from AdoMet to the 7-aminomethyl group of 7-deazaguanine (preQ1-tRNA) to give epoxyqueuosine (oQ-tRNA). The chain is S-adenosylmethionine:tRNA ribosyltransferase-isomerase from Bacillus cytotoxicus (strain DSM 22905 / CIP 110041 / 391-98 / NVH 391-98).